The primary structure comprises 332 residues: MKVTFEQLKEAFNRVLLDACVARETADACAEMFARTTESGVYSHGVNRFPRFIQQLDNGDIIPEAQPQRVTTLGAIEQWDAQRSIGNLTAKKMMDRAIELASDHGIGLVALRNANHWMRGGSYGWQAAEKGYIGICWTNSIAVMAPWGAKECRIGTNPLIVAIPSTPITMVDMSMSMFSYGMLEVNRLAGRELPVDGGFDDDGRLTKEPGTIEKNRRILPMGYWKGSGLSIVLDMIATLLSNGSSVAEVTQENSDEYGVSQIFIAIEVDKLIDGATRDAKLQRIMDFITTAERADENVAVRLPGHEFTRLLDENRRNGITVDDSVWAKIQAL.

The active-site Proton donor is the histidine 44. NAD(+)-binding positions include 168-174 (ITMVDMS), 224-225 (WK), and 304-306 (GHE).

It belongs to the LDH2/MDH2 oxidoreductase family. DlgD subfamily. Homodimer.

It localises to the cytoplasm. It carries out the reaction 3-dehydro-L-gulonate + NAD(+) = 2,3-dioxo-L-gulonate + NADH + H(+). The catalysed reaction is 3-dehydro-L-gulonate + NADP(+) = 2,3-dioxo-L-gulonate + NADPH + H(+). In terms of biological role, catalyzes the reduction of 2,3-diketo-L-gulonate in the presence of NADH, to form 3-keto-L-gulonate. This is 2,3-diketo-L-gulonate reductase from Klebsiella oxytoca.